Reading from the N-terminus, the 315-residue chain is Beta-ketoacyl-[acyl-carrier-protein] synthase III (315 aa).

Catalysis depends on residues Cys115 and His244. Residues 245–249 form an ACP-binding region; that stretch reads QANAR. Asn274 is an active-site residue.

It belongs to the thiolase-like superfamily. FabH family. In terms of assembly, homodimer.

It localises to the cytoplasm. It catalyses the reaction malonyl-[ACP] + acetyl-CoA + H(+) = 3-oxobutanoyl-[ACP] + CO2 + CoA. It functions in the pathway lipid metabolism; fatty acid biosynthesis. Catalyzes the condensation reaction of fatty acid synthesis by the addition to an acyl acceptor of two carbons from malonyl-ACP. Catalyzes the first condensation reaction which initiates fatty acid synthesis and may therefore play a role in governing the total rate of fatty acid production. Possesses both acetoacetyl-ACP synthase and acetyl transacylase activities. Its substrate specificity determines the biosynthesis of branched-chain and/or straight-chain of fatty acids. In Rubrobacter xylanophilus (strain DSM 9941 / JCM 11954 / NBRC 16129 / PRD-1), this protein is Beta-ketoacyl-[acyl-carrier-protein] synthase III.